A 95-amino-acid chain; its full sequence is Alpha-bungarotoxin isoform V31 (95 aa).

The signal sequence occupies residues 1 to 21 (MKTLLLTLVVVTIVCLDLGYT). Cystine bridges form between C24/C44, C37/C65, C50/C54, C69/C80, and C81/C86.

Belongs to the three-finger toxin family. Long-chain subfamily. Type II alpha-neurotoxin sub-subfamily. In terms of assembly, monomer in solution, homodimer in crystal state. Expressed by the venom gland.

It is found in the secreted. Binds with high affinity to muscular (alpha-1/CHRNA1) and neuronal (alpha-7/CHRNA7) nicotinic acetylcholine receptor (nAChR) and inhibits acetylcholine from binding to the receptor, thereby impairing neuromuscular and neuronal transmission. The chain is Alpha-bungarotoxin isoform V31 from Bungarus multicinctus (Many-banded krait).